The primary structure comprises 599 residues: Subtilisin-like protease 1 (599 aa).

The first 20 residues, 1–20 (MRTVFIYACIISLVLRTIPA), serve as a signal peptide directing secretion. Residues 21–195 (HNDLMSKEKE…VESDELVGAD (175 aa)) constitute a propeptide, inhibition peptide. Asparagine 57 carries N-linked (GlcNAc...) asparagine glycosylation. A coiled-coil region spans residues 74–101 (EDAPKEELNKIEMEKKKAEEEAKNSKKK). Residues asparagine 123, threonine 126, proline 128, and glycine 183 each coordinate Ca(2+). N-linked (GlcNAc...) asparagine glycosylation occurs at asparagine 227. Residue aspartate 251 coordinates Ca(2+). A Peptidase S8 domain is found at 257 to 574 (QWGLDLARLD…GGYIDILNAV (318 aa)). 2 disulfides stabilise this stretch: cysteine 283–cysteine 393 and cysteine 372–cysteine 389. Aspartate 286 acts as the Charge relay system in catalysis. Ca(2+)-binding residues include aspartate 295, glutamate 306, aspartate 314, aspartate 315, aspartate 316, asparagine 318, isoleucine 320, aspartate 322, and aspartate 323. The N-linked (GlcNAc...) asparagine glycan is linked to asparagine 331. Histidine 342 acts as the Charge relay system in catalysis. Isoleucine 353 is a binding site for Ca(2+). An N-linked (GlcNAc...) asparagine glycan is attached at asparagine 355. The Ca(2+) site is built by asparagine 356, isoleucine 358, and valine 360. Asparagine 402 and asparagine 434 each carry an N-linked (GlcNAc...) asparagine glycan. Cysteine 435 and cysteine 448 are oxidised to a cystine. The Charge relay system role is filled by serine 519.

The protein belongs to the peptidase S8 family. Post-translationally, the N-terminal prodomain is cleaved.

It is found in the secreted. Its subcellular location is the parasitophorous vacuole lumen. The protein localises to the cytoplasmic vesicle. The protein resides in the secretory vesicle. It catalyses the reaction Hydrolysis of proteins with broad specificity for peptide bonds, and a preference for a large uncharged residue in P1. Hydrolyzes peptide amides.. Functionally, mediates the proteolytic maturation of serine protease SERA3. Mediates the proteolytic maturation of MSP1, and thereby may prime the parasite cell surface for invasion of fresh erythrocytes. Required for completion of the parasite pre-erythrocytic stages. Required for hepatic schizont development and merozoite formation. Required for the egress of the hepatic merozoites from the parasitophorous vacuole. Required for parasite infectivity during blood stages. Required for male gamete egress. This is Subtilisin-like protease 1 from Plasmodium berghei (strain Anka).